A 399-amino-acid polypeptide reads, in one-letter code: Elongation factor Tu (399 aa).

Residues 10 to 209 form the tr-type G domain; the sequence is KPHVNIGTIG…EVDAYIPTPE (200 aa). A G1 region spans residues 19–26; that stretch reads GHVDHGKT. 19–26 provides a ligand contact to GTP; the sequence is GHVDHGKT. Residue Thr26 coordinates Mg(2+). The interval 60–64 is G2; that stretch reads GITIA. Residues 81-84 are G3; that stretch reads DCPG. GTP is bound by residues 81–85 and 136–139; these read DCPGH and NKQD. The segment at 136–139 is G4; that stretch reads NKQD. The segment at 174 to 176 is G5; the sequence is SAL.

This sequence belongs to the TRAFAC class translation factor GTPase superfamily. Classic translation factor GTPase family. EF-Tu/EF-1A subfamily. In terms of assembly, monomer.

Its subcellular location is the cytoplasm. The enzyme catalyses GTP + H2O = GDP + phosphate + H(+). In terms of biological role, GTP hydrolase that promotes the GTP-dependent binding of aminoacyl-tRNA to the A-site of ribosomes during protein biosynthesis. This Helicobacter pylori (strain G27) protein is Elongation factor Tu.